The sequence spans 308 residues: tRNA dimethylallyltransferase 1 (308 aa).

An ATP-binding site is contributed by 9-16 (GPTGVGKT). Position 11–16 (11–16 (TGVGKT)) interacts with substrate. The segment at 34–37 (DSRQ) is interaction with substrate tRNA.

The protein belongs to the IPP transferase family. In terms of assembly, monomer. Mg(2+) is required as a cofactor.

The catalysed reaction is adenosine(37) in tRNA + dimethylallyl diphosphate = N(6)-dimethylallyladenosine(37) in tRNA + diphosphate. In terms of biological role, catalyzes the transfer of a dimethylallyl group onto the adenine at position 37 in tRNAs that read codons beginning with uridine, leading to the formation of N6-(dimethylallyl)adenosine (i(6)A). This chain is tRNA dimethylallyltransferase 1, found in Bacteroides thetaiotaomicron (strain ATCC 29148 / DSM 2079 / JCM 5827 / CCUG 10774 / NCTC 10582 / VPI-5482 / E50).